The primary structure comprises 384 residues: 4-hydroxy-3-methylbut-2-en-1-yl diphosphate synthase (flavodoxin) 1 (384 aa).

[4Fe-4S] cluster-binding residues include Cys281, Cys284, Cys316, and Glu323.

It belongs to the IspG family. Requires [4Fe-4S] cluster as cofactor.

It catalyses the reaction (2E)-4-hydroxy-3-methylbut-2-enyl diphosphate + oxidized [flavodoxin] + H2O + 2 H(+) = 2-C-methyl-D-erythritol 2,4-cyclic diphosphate + reduced [flavodoxin]. Its pathway is isoprenoid biosynthesis; isopentenyl diphosphate biosynthesis via DXP pathway; isopentenyl diphosphate from 1-deoxy-D-xylulose 5-phosphate: step 5/6. Its function is as follows. Converts 2C-methyl-D-erythritol 2,4-cyclodiphosphate (ME-2,4cPP) into 1-hydroxy-2-methyl-2-(E)-butenyl 4-diphosphate. This is 4-hydroxy-3-methylbut-2-en-1-yl diphosphate synthase (flavodoxin) 1 from Streptomyces coelicolor (strain ATCC BAA-471 / A3(2) / M145).